A 400-amino-acid chain; its full sequence is Eukaryotic translation initiation factor 3 subunit M (400 aa).

Positions 180 to 354 (LIAKIYSALV…QSFAVHRAQK (175 aa)) constitute a PCI domain.

The protein belongs to the eIF-3 subunit M family. Component of the eukaryotic translation initiation factor 3 (eIF-3) complex.

The protein localises to the cytoplasm. Its function is as follows. Component of the eukaryotic translation initiation factor 3 (eIF-3) complex, which is involved in protein synthesis of a specialized repertoire of mRNAs and, together with other initiation factors, stimulates binding of mRNA and methionyl-tRNAi to the 40S ribosome. The eIF-3 complex specifically targets and initiates translation of a subset of mRNAs involved in cell proliferation. This is Eukaryotic translation initiation factor 3 subunit M from Yarrowia lipolytica (strain CLIB 122 / E 150) (Yeast).